Here is a 1324-residue protein sequence, read N- to C-terminus: DNA-directed RNA polymerase subunit beta' (1324 aa).

4 residues coordinate Zn(2+): Cys-219, Cys-292, Cys-299, and Cys-302. The disordered stretch occupies residues 1293–1324 (ARDFEFASSDVEEDELTEEDDDYGDEEEEDAF). A compositionally biased stretch (acidic residues) spans 1302–1324 (DVEEDELTEEDDDYGDEEEEDAF).

It belongs to the RNA polymerase beta' chain family. RpoC2 subfamily. As to quaternary structure, in cyanobacteria the RNAP catalytic core is composed of 2 alpha, 1 beta, 1 beta', 1 gamma and 1 omega subunit. When a sigma factor is associated with the core the holoenzyme is formed, which can initiate transcription. Zn(2+) is required as a cofactor.

It carries out the reaction RNA(n) + a ribonucleoside 5'-triphosphate = RNA(n+1) + diphosphate. In terms of biological role, DNA-dependent RNA polymerase catalyzes the transcription of DNA into RNA using the four ribonucleoside triphosphates as substrates. This Thermosynechococcus vestitus (strain NIES-2133 / IAM M-273 / BP-1) protein is DNA-directed RNA polymerase subunit beta'.